A 158-amino-acid chain; its full sequence is L-alanine exporter AlaE (158 aa).

The next 4 helical transmembrane spans lie at 23–43 (FAMVVYCSVVGMMIEIFVSGM), 53–73 (LVAIPVNMVIAWPYGLYRDAV), 92–112 (VIAYITFQSPVYAAILLFVGA), and 117–137 (IITAVSSNIVVSMMMGAAYGY).

This sequence belongs to the AlaE exporter family.

It localises to the cell inner membrane. Its function is as follows. Exports L-alanine. The protein is L-alanine exporter AlaE of Cronobacter sakazakii (strain ATCC BAA-894) (Enterobacter sakazakii).